We begin with the raw amino-acid sequence, 202 residues long: Small ribosomal subunit protein uS4 (202 aa).

A disordered region spans residues 17 to 42 (ELPGLSRKTPRRAYPPGQHGQARKKR). The S4 RNA-binding domain occupies 90–152 (MRLDNTIFRL…DASRKLIETH (63 aa)).

Belongs to the universal ribosomal protein uS4 family. Part of the 30S ribosomal subunit. Contacts protein S5. The interaction surface between S4 and S5 is involved in control of translational fidelity.

Its function is as follows. One of the primary rRNA binding proteins, it binds directly to 16S rRNA where it nucleates assembly of the body of the 30S subunit. Functionally, with S5 and S12 plays an important role in translational accuracy. This chain is Small ribosomal subunit protein uS4, found in Acaryochloris marina (strain MBIC 11017).